Reading from the N-terminus, the 272-residue chain is Diaminopimelate epimerase (272 aa).

2 residues coordinate substrate: Asn-11 and Asn-60. Catalysis depends on Cys-69, which acts as the Proton donor. Substrate is bound by residues 70 to 71 (GN), Asn-181, and 199 to 200 (ER). Cys-209 functions as the Proton acceptor in the catalytic mechanism. 210-211 (GT) is a binding site for substrate.

This sequence belongs to the diaminopimelate epimerase family. Homodimer.

Its subcellular location is the cytoplasm. It catalyses the reaction (2S,6S)-2,6-diaminopimelate = meso-2,6-diaminopimelate. Its pathway is amino-acid biosynthesis; L-lysine biosynthesis via DAP pathway; DL-2,6-diaminopimelate from LL-2,6-diaminopimelate: step 1/1. Functionally, catalyzes the stereoinversion of LL-2,6-diaminopimelate (L,L-DAP) to meso-diaminopimelate (meso-DAP), a precursor of L-lysine and an essential component of the bacterial peptidoglycan. The sequence is that of Diaminopimelate epimerase from Helicobacter pylori (strain P12).